Reading from the N-terminus, the 336-residue chain is Major histocompatibility complex class I-related protein 1 (336 aa).

Positions 1-18 (MMLLLPLIIVLMMKLSDA) are cleaved as a signal peptide. Residues 19–105 (RTHSLRYFRL…KQLQHHYNHS (87 aa)) are alpha-1. The antigen-binding cleft stretch occupies residues 19–197 (RTHSLRYFRL…EYGKDALQRT (179 aa)). Over 19–298 (RTHSLRYFRL…QESETILLVV (280 aa)) the chain is Extracellular. The 8-(9H-purin-6-yl)-2-oxa-8-azabicyclo[3.3.1]nona-3,6-diene-4,6-dicarbaldehyde site is built by Tyr-25 and Arg-27. 5-(2-oxoethylideneamino)-6-(D-ribitylamino)uracil contacts are provided by Arg-27, Ser-42, and Lys-61. Arg-27, Ser-42, and Lys-61 together coordinate 5-(2-oxopropylideneamino)-6-(D-ribitylamino)uracil. 7-hydroxy-6-methyl-8-(1-D-ribityl)lumazine-binding residues include Arg-27, Ser-42, and Lys-61. Positions 61 and 76 each coordinate 8-(9H-purin-6-yl)-2-oxa-8-azabicyclo[3.3.1]nona-3,6-diene-4,6-dicarbaldehyde. Lys-61 is a binding site for 2-amino-4-oxopteridine-6-carbaldehyde. Lys-61 provides a ligand contact to pyridoxal. Asn-103 is a glycosylation site (N-linked (GlcNAc...) asparagine). The interval 106 to 197 (GFHTYQRMIG…EYGKDALQRT (92 aa)) is alpha-2. Arg-112 provides a ligand contact to 8-(9H-purin-6-yl)-2-oxa-8-azabicyclo[3.3.1]nona-3,6-diene-4,6-dicarbaldehyde. Positions 112, 170, and 171 each coordinate 5-(2-oxoethylideneamino)-6-(D-ribitylamino)uracil. The 5-(2-oxopropylideneamino)-6-(D-ribitylamino)uracil site is built by Arg-112, Tyr-170, and Gln-171. Residues Arg-112, Tyr-170, and Gln-171 each contribute to the 7-hydroxy-6-methyl-8-(1-D-ribityl)lumazine site. 2 cysteine pairs are disulfide-bonded: Cys-116-Cys-179 and Cys-218-Cys-274. Residues 198–289 (EPPKVRVNHK…GVHMVLQGFQ (92 aa)) are alpha-3. The region spanning 200–295 (PKVRVNHKET…QGFQESETIL (96 aa)) is the Ig-like C1-type domain. Residues 290–298 (ESETILLVV) are connecting peptide. The helical transmembrane segment at 299 to 319 (KAVGFIVLAIALAGVGILAWR) threads the bilayer. At 320–336 (KRPRGKNKVICLSTPEH) the chain is on the cytoplasmic side.

Belongs to the MHC class I family. In terms of assembly, heterotrimer that consists of MR1, B2M and metabolite antigen. Major classes of metabolite ligands presented by MR1 include riboflavin-related antigens, pyrimidines and ribityl lumazines, nucleobase adducts and folate derivatives. Forms reversible covalent Schiff base complexes with microbial pyrimidine-based metabolite, which serves as a molecular switch triggering complete folding, stable association with B2M and translocation of the ternary complex from endoplasmic reticulum to the plasma membrane. Alternatively, forms non-Schiff base complexes with ribityl lumazines. On antigen-presenting cells, the ternary complex interacts with TCR on MR1-restricted T cells. Interacts with TAPBP and TAPBPL chaperones in the endoplasmic reticulum. TAPBP associated or not with MHC class I peptide loading complex binds ligand-free MR1 or MR1-B2M complex, providing for stable MR1 pools ready for metabolite antigen processing. TAPBPL interacts with MR1 in a ligand-independent way; this interaction may stabilize MR1 pool and facilitate ligand loading and dissociation. Structurally, MR1-B2M heterodimer adopts a topology similar to classical MHC class I molecules, with alpha-1 and alpha-2 domains of MR1 forming the antigen-binding cleft composed of two alpha-helices resting on a floor of 7-stranded anti-parallel beta-pleated sheet. MR1-B2M heterodimer (via alpha-helices) interacts with TCR (via CDR domains). Post-translationally, N-glycosylated.

It localises to the cell membrane. The protein resides in the endoplasmic reticulum membrane. It is found in the golgi apparatus membrane. Its subcellular location is the early endosome membrane. The protein localises to the late endosome membrane. Antigen-presenting molecule specialized in displaying microbial pyrimidine-based metabolites to alpha-beta T cell receptors (TCR) on innate-type mucosal-associated invariant T (MAIT) cells. In complex with B2M preferentially presents riboflavin-derived metabolites to semi-invariant TCRs on MAIT cells, guiding immune surveillance of the microbial metabolome at mucosal epithelial barriers. Signature pyrimidine-based microbial antigens are generated via non-enzymatic condensation of metabolite intermediates of the riboflavin pathway with by-products arising from other metabolic pathways such as glycolysis. Typical potent antigenic metabolites are 5-(2-oxoethylideneamino)-6-D-ribitylaminouracil (5-OE-RU) and 5-(2-oxopropylideneamino)-6-D-ribitylaminouracil (5-OP-RU), products of condensation of 5-amino-6-D-ribityaminouracil (5-A-RU) with glyoxal or methylglyoxal by-products, respectively. May present microbial antigens to various MAIT cell subsets, providing for unique recognition of diverse microbes, including pathogens that do not synthesize riboflavin. Upon antigen recognition, elicits rapid innate-type MAIT cell activation to eliminate pathogenic microbes by directly killing infected cells. During T cell development, drives thymic selection and post-thymic terminal differentiation of MAIT cells in a process dependent on commensal microflora. Acts as an immune sensor of cancer cell metabolome. May present a tumor-specific or -associated metabolite essential for cancer cell survival to a pan-cancer TCR on a non-MAIT CD8-positive T cell clone, triggering T cell-mediated killing of a wide range of cancer cell types. May present tumor-enriched pyridoxal and pyridoxal 5'-phosphate antigens, enabling preferential recognition of cancer cells. Presents nucleobase carbonyl adducts generated during oxidative stress. Captures M3Ade, a nucleobase adduct composed of one adenine modified by a malondialdehyde trimer, for recognition by MR1-restricted T cell clones expressing a polyclonal TCR repertoire. The polypeptide is Major histocompatibility complex class I-related protein 1 (Bos taurus (Bovine)).